A 218-amino-acid chain; its full sequence is Adenylate kinase (218 aa).

10 to 15 is an ATP binding site; it reads GAGKGT. The segment at 30–59 is NMP; sequence STGNMLRAAVKAGTPLGLEAKKVMDAGGLV. Residues Thr31, Arg36, 57-59, 85-88, and Gln92 contribute to the AMP site; these read GLV and GFPR. The segment at 122–159 is LID; that stretch reads GRRVHPASGRSYHVRFNPPKAEGVDDVTGEPLVQRDDD. ATP is bound by residues Arg123 and 132-133; that span reads SY. The AMP site is built by Arg156 and Arg167. Gly203 serves as a coordination point for ATP.

This sequence belongs to the adenylate kinase family. In terms of assembly, monomer.

It is found in the cytoplasm. The enzyme catalyses AMP + ATP = 2 ADP. It functions in the pathway purine metabolism; AMP biosynthesis via salvage pathway; AMP from ADP: step 1/1. Functionally, catalyzes the reversible transfer of the terminal phosphate group between ATP and AMP. Plays an important role in cellular energy homeostasis and in adenine nucleotide metabolism. The polypeptide is Adenylate kinase (Bordetella parapertussis (strain 12822 / ATCC BAA-587 / NCTC 13253)).